Reading from the N-terminus, the 205-residue chain is Golgi apparatus membrane protein TVP23 homolog B (205 aa).

Methionine 1 bears the N-acetylmethionine mark. The segment at 1–21 is disordered; sequence MLQQDSNDDTEDVSLFDAEEE. Transmembrane regions (helical) follow at residues 34–53, 54–72, 126–146, and 152–172; these read PVAS…VYLL, CELL…ILLL, IFWL…FSAL, and KWLA…YGYI.

The protein belongs to the TVP23 family.

The protein resides in the membrane. In Pongo abelii (Sumatran orangutan), this protein is Golgi apparatus membrane protein TVP23 homolog B (TVP23B).